A 185-amino-acid chain; its full sequence is Large ribosomal subunit protein uL22 (185 aa).

This sequence belongs to the universal ribosomal protein uL22 family.

The sequence is that of Large ribosomal subunit protein uL22 (RPL17) from Debaryomyces hansenii (strain ATCC 36239 / CBS 767 / BCRC 21394 / JCM 1990 / NBRC 0083 / IGC 2968) (Yeast).